Consider the following 504-residue polypeptide: Lysine--tRNA ligase (504 aa).

The short motif at 23–31 (PSGPIHIGN) is the 'HIGH' region element.

This sequence belongs to the class-I aminoacyl-tRNA synthetase family.

It is found in the cytoplasm. The enzyme catalyses tRNA(Lys) + L-lysine + ATP = L-lysyl-tRNA(Lys) + AMP + diphosphate. This Picrophilus torridus (strain ATCC 700027 / DSM 9790 / JCM 10055 / NBRC 100828 / KAW 2/3) protein is Lysine--tRNA ligase.